We begin with the raw amino-acid sequence, 190 residues long: Peptidyl-tRNA hydrolase (190 aa).

TRNA is bound at residue Y14. H19 functions as the Proton acceptor in the catalytic mechanism. TRNA is bound by residues Y63, N65, and N112.

This sequence belongs to the PTH family. Monomer.

The protein localises to the cytoplasm. The catalysed reaction is an N-acyl-L-alpha-aminoacyl-tRNA + H2O = an N-acyl-L-amino acid + a tRNA + H(+). Functionally, hydrolyzes ribosome-free peptidyl-tRNAs (with 1 or more amino acids incorporated), which drop off the ribosome during protein synthesis, or as a result of ribosome stalling. Catalyzes the release of premature peptidyl moieties from peptidyl-tRNA molecules trapped in stalled 50S ribosomal subunits, and thus maintains levels of free tRNAs and 50S ribosomes. This is Peptidyl-tRNA hydrolase from Kosmotoga olearia (strain ATCC BAA-1733 / DSM 21960 / TBF 19.5.1).